Reading from the N-terminus, the 462-residue chain is F-box/LRR-repeat protein At5g38396 (462 aa).

Residues 1–47 (MDLLRNIPDELICHILSFLTTKEAALTSVLSKRWRNLLAFVSNLHID) enclose the F-box domain. LRR repeat units follow at residues 118–146 (SIDLCMDEYFLLSSKRFESKNLVRLKLHR), 148–175 (CIGQREKTVGWLAGEIFLPMLKTLELDY), 197–222 (VDAFWFTTFTDVTVSNPSLKTLTMSS), 302–333 (CLDLSANTLEMLSLSCESMPVFKNLKSLSIKS), and 334–359 (AENRGWQAMPVLLRNCPHLETLVLEG).

The sequence is that of F-box/LRR-repeat protein At5g38396 from Arabidopsis thaliana (Mouse-ear cress).